The sequence spans 263 residues: Chromosomal replication initiator protein DnaA (263 aa).

Residue D1 is a region of interest, domain I, interacts with DnaA modulators. Residue D1 is a region of interest, domain II. The segment at 1-177 is domain III, AAA+ region; sequence DSGLGKTHLL…GIINKIEFSI (177 aa). Residues G3, G5, K6, and T7 each contribute to the ATP site. Residues 178–263 are domain IV, binds dsDNA; the sequence is IQDNSAAPKI…KNYSEIGVAF (86 aa).

It belongs to the DnaA family. Oligomerizes as a right-handed, spiral filament on DNA at oriC.

Its subcellular location is the cytoplasm. In terms of biological role, plays an essential role in the initiation and regulation of chromosomal replication. ATP-DnaA binds to the origin of replication (oriC) to initiate formation of the DNA replication initiation complex once per cell cycle. Binds the DnaA box (a 9 base pair repeat at the origin) and separates the double-stranded (ds)DNA. Forms a right-handed helical filament on oriC DNA; dsDNA binds to the exterior of the filament while single-stranded (ss)DNA is stabiized in the filament's interior. The ATP-DnaA-oriC complex binds and stabilizes one strand of the AT-rich DNA unwinding element (DUE), permitting loading of DNA polymerase. After initiation quickly degrades to an ADP-DnaA complex that is not apt for DNA replication. Binds acidic phospholipids. This chain is Chromosomal replication initiator protein DnaA, found in Spiroplasma apis.